The sequence spans 254 residues: Type III pantothenate kinase 2 (254 aa).

6-13 is a binding site for ATP; sequence DMGNSHIH. 107 to 110 lines the substrate pocket; that stretch reads GADR. The active-site Proton acceptor is aspartate 109. A K(+)-binding site is contributed by aspartate 130. Residue threonine 133 coordinates ATP. Residue threonine 185 participates in substrate binding.

The protein belongs to the type III pantothenate kinase family. As to quaternary structure, homodimer. It depends on NH4(+) as a cofactor. K(+) is required as a cofactor.

The protein resides in the cytoplasm. The catalysed reaction is (R)-pantothenate + ATP = (R)-4'-phosphopantothenate + ADP + H(+). It functions in the pathway cofactor biosynthesis; coenzyme A biosynthesis; CoA from (R)-pantothenate: step 1/5. Catalyzes the phosphorylation of pantothenate (Pan), the first step in CoA biosynthesis. The polypeptide is Type III pantothenate kinase 2 (Francisella tularensis subsp. holarctica (strain LVS)).